The primary structure comprises 350 residues: Quinolinate phosphoribosyltransferase [decarboxylating] 1b (350 aa).

Substrate contacts are provided by residues R141, 172 to 174 (TRK), R196, K206, E239, D266, 298 to 300 (SGN), and 319 to 321 (SGA).

Belongs to the NadC/ModD family.

The catalysed reaction is nicotinate beta-D-ribonucleotide + CO2 + diphosphate = quinolinate + 5-phospho-alpha-D-ribose 1-diphosphate + 2 H(+). Its pathway is alkaloid biosynthesis; nicotine biosynthesis. It functions in the pathway cofactor biosynthesis; NAD(+) biosynthesis; nicotinate D-ribonucleotide from quinolinate: step 1/1. Functionally, involved in the biosynthesis of pyridine alkaloid natural products, leading mainly to the production of anabasine, anatabine, nicotine and nornicotine, effective deterrents against herbivores with antiparasitic and pesticide properties (neurotoxins); nornicotine serves as the precursor in the synthesis of the carcinogen compound N'-nitrosonornicotine (NNN). Involved in the catabolism of quinolinic acid (QA). The polypeptide is Quinolinate phosphoribosyltransferase [decarboxylating] 1b (Nicotiana tabacum (Common tobacco)).